The chain runs to 394 residues: Phosphoglycerate kinase (394 aa).

Substrate contacts are provided by residues 21-23 (DFN), Arg37, 60-63 (HLGR), Arg119, and Arg152. ATP contacts are provided by residues Lys202, Glu324, and 350-353 (GGDS).

Belongs to the phosphoglycerate kinase family. As to quaternary structure, monomer.

The protein localises to the cytoplasm. The enzyme catalyses (2R)-3-phosphoglycerate + ATP = (2R)-3-phospho-glyceroyl phosphate + ADP. Its pathway is carbohydrate degradation; glycolysis; pyruvate from D-glyceraldehyde 3-phosphate: step 2/5. The protein is Phosphoglycerate kinase of Carboxydothermus hydrogenoformans (strain ATCC BAA-161 / DSM 6008 / Z-2901).